The sequence spans 156 residues: Ribosomal RNA large subunit methyltransferase H (156 aa).

S-adenosyl-L-methionine is bound by residues Leu-73, Gly-104, and Leu-123 to Leu-128.

This sequence belongs to the RNA methyltransferase RlmH family. In terms of assembly, homodimer.

The protein localises to the cytoplasm. The enzyme catalyses pseudouridine(1915) in 23S rRNA + S-adenosyl-L-methionine = N(3)-methylpseudouridine(1915) in 23S rRNA + S-adenosyl-L-homocysteine + H(+). Specifically methylates the pseudouridine at position 1915 (m3Psi1915) in 23S rRNA. The sequence is that of Ribosomal RNA large subunit methyltransferase H from Pectobacterium carotovorum subsp. carotovorum (strain PC1).